Reading from the N-terminus, the 660-residue chain is ATP-dependent zinc metalloprotease FtsH (660 aa).

Positions 1-20 (MMPSSQRPSPRGSRQSPSPD) are disordered. The Cytoplasmic segment spans residues 1–24 (MMPSSQRPSPRGSRQSPSPDQRGR). A helical membrane pass occupies residues 25–45 (IAFAILATLVVAVLLLTLFSH). The Extracellular segment spans residues 46–118 (APSGQPLGYS…VQVSYITPGP (73 aa)). Residues 119–139 (GIASTIIEYVIFFGIFIGIWV) traverse the membrane as a helical segment. The Cytoplasmic portion of the chain corresponds to 140-660 (YLTRRTQGSV…ASHDDTDPVS (521 aa)). Position 213-220 (213-220 (GPPGTGKT)) interacts with ATP. Zn(2+) is bound at residue His435. The active site involves Glu436. The Zn(2+) site is built by His439 and Asp511.

The protein in the central section; belongs to the AAA ATPase family. In the C-terminal section; belongs to the peptidase M41 family. As to quaternary structure, homohexamer. The cofactor is Zn(2+).

Its subcellular location is the cell membrane. In terms of biological role, acts as a processive, ATP-dependent zinc metallopeptidase for both cytoplasmic and membrane proteins. Plays a role in the quality control of integral membrane proteins. The chain is ATP-dependent zinc metalloprotease FtsH from Acidimicrobium ferrooxidans (strain DSM 10331 / JCM 15462 / NBRC 103882 / ICP).